The sequence spans 284 residues: Acetyl-coenzyme A carboxylase carboxyl transferase subunit beta (284 aa).

The CoA carboxyltransferase N-terminal domain occupies 25–284; that stretch reads MWVKCPGCSA…ILGILYRPAA (260 aa). 4 residues coordinate Zn(2+): C29, C32, C48, and C51. The C4-type zinc finger occupies 29-51; that stretch reads CPGCSATLLAKDLDANLNVCPTC.

The protein belongs to the AccD/PCCB family. As to quaternary structure, acetyl-CoA carboxylase is a heterohexamer composed of biotin carboxyl carrier protein (AccB), biotin carboxylase (AccC) and two subunits each of ACCase subunit alpha (AccA) and ACCase subunit beta (AccD). Zn(2+) serves as cofactor.

It localises to the cytoplasm. The enzyme catalyses N(6)-carboxybiotinyl-L-lysyl-[protein] + acetyl-CoA = N(6)-biotinyl-L-lysyl-[protein] + malonyl-CoA. It functions in the pathway lipid metabolism; malonyl-CoA biosynthesis; malonyl-CoA from acetyl-CoA: step 1/1. Functionally, component of the acetyl coenzyme A carboxylase (ACC) complex. Biotin carboxylase (BC) catalyzes the carboxylation of biotin on its carrier protein (BCCP) and then the CO(2) group is transferred by the transcarboxylase to acetyl-CoA to form malonyl-CoA. This is Acetyl-coenzyme A carboxylase carboxyl transferase subunit beta from Pelobacter propionicus (strain DSM 2379 / NBRC 103807 / OttBd1).